The chain runs to 138 residues: Large ribosomal subunit protein uL16 (138 aa).

It belongs to the universal ribosomal protein uL16 family. As to quaternary structure, part of the 50S ribosomal subunit.

Binds 23S rRNA and is also seen to make contacts with the A and possibly P site tRNAs. This chain is Large ribosomal subunit protein uL16, found in Hyphomonas neptunium (strain ATCC 15444).